Here is a 377-residue protein sequence, read N- to C-terminus: MFPQTTMDHILHPTPREGYYVVELNRSVWVVPNYYINLTPIGTGAYGTVCAAECTRSGTRVAIKKFNRPFQSIIHARRTYRELRLLRCMCHENIIDLLDVFTPNENVNDIEDVYFVSMLMGADLSNILKIQRLNDDHIQFLVYQILRGLKYIHSADIIHRDLKPSNIAVNEDCELKILDFGLARQTDSEMTGYVATRWYRAPEIMLNWMHYTQTVDVWSVGCILAELITGKTLFPGSDHIDQLTRIMSVTGTPDEEFLKKISSEEARNYIRNLPKMTRRDFKRLFAQATPQAIDLLEKMLHLDPDRRPTAKEAMEHEYLAAYHDETDEPIAEEMDLNDDVRADTIDEWKKIIWEEISDFQKNVAFADEEEDEEKMES.

The Protein kinase domain occupies 35-319; sequence YINLTPIGTG…AKEAMEHEYL (285 aa). ATP is bound by residues 41–49 and K64; that span reads IGTGAYGTV. The Proton acceptor role is filled by D179. A Phosphothreonine modification is found at T191. Residues 191 to 193 carry the TXY motif; sequence TGY. Y193 is modified (phosphotyrosine).

The protein belongs to the protein kinase superfamily. CMGC Ser/Thr protein kinase family. MAP kinase subfamily. In terms of assembly, interacts with transcription factor atf-7; perhaps in a manner dependent on dual specificity protein kinase sek-1. The cofactor is Mg(2+). Mn(2+) serves as cofactor. In terms of processing, dually phosphorylated on Thr-191 and Tyr-193, probably by sek-1, which activates the enzyme. Increased phosphorylation in response to the heavy metal arsenite. Increased phosphorylation in response to intestinal colonization by probiotic Lactobacillus fermentum strain JDFM216. In terms of tissue distribution, expressed in intestinal cells.

Its subcellular location is the nucleus. The catalysed reaction is L-seryl-[protein] + ATP = O-phospho-L-seryl-[protein] + ADP + H(+). It catalyses the reaction L-threonyl-[protein] + ATP = O-phospho-L-threonyl-[protein] + ADP + H(+). With respect to regulation, activated by phosphorylation on threonine and tyrosine. Inhibited by pyridinyl-imidazole related compounds. Functionally, serine/threonine kinase which responds to activation by environmental stress and pro-inflammatory cytokines by phosphorylating downstream targets. As part of a MAP kinase signaling pathway, plays a role in modulation of lifespan and immunity. Phosphorylates skn-1 which probably regulates skn-1 nuclear translocation in response to oxidative stress. Probably by activating skn-1, involved in the up-regulation of gcs-1 and glutathione-S-transferase gst-4 expression upon bacteria infection. Up-regulates expression of gcs-1 in intestinal cells upon arsenite treatment. Functions downstream of the MAPKK sek-1 and the MAPKKK nsy-1 as the MAP kinase which regulates pathogen resistance and responses to oxidative stress. Required for expression of antimicrobial peptide nlp-29 in response to fungal infection or physical injury. Involved in resistance to the nematotoxic C.cinerea galectin (Cgl2). May play a redundant role with other MAP kinases in susceptibility to anoxia, downstream of tir-1/nsy-1. Phosphorylates transcription factor rnt-1 during oxidative stress which results in rnt-1 stabilization in the intestine. Phosphorylates transcription factor atf-7 during pathogen infection resulting in modulation of target genes. Probably downstream of nsy-1 and sek-1, involved in germline apoptosis induced by heavy metals, such as Cu(2+). Regulates the basal expression of immune effector genes including irg-4, irg-5, mul-1 and drd-50. The chain is Mitogen-activated protein kinase pmk-1 from Caenorhabditis elegans.